The chain runs to 203 residues: MARFRGSITKVSRRLGIALSPKAEKYLERRPYAPGEHGQSRRGKVSEYALQLREKQKMKYLYGVLEKQFRIYYKKAVAQRGVTGDNLVKMLERRFDNVVYRCGFSPSRAGARQLVTHGHMLVNGKKVNIPSFLVSPGDQIEFRQKSRNLDAVADSLNKAAESRIPEWIQVDKANRKAVFLAIPEREAVQEPFNEQLVVELYSK.

Residues 93–154 form the S4 RNA-binding domain; sequence RRFDNVVYRC…KSRNLDAVAD (62 aa).

The protein belongs to the universal ribosomal protein uS4 family. In terms of assembly, part of the 30S ribosomal subunit. Contacts protein S5. The interaction surface between S4 and S5 is involved in control of translational fidelity.

Functionally, one of the primary rRNA binding proteins, it binds directly to 16S rRNA where it nucleates assembly of the body of the 30S subunit. With S5 and S12 plays an important role in translational accuracy. This chain is Small ribosomal subunit protein uS4, found in Chlorobaculum parvum (strain DSM 263 / NCIMB 8327) (Chlorobium vibrioforme subsp. thiosulfatophilum).